The sequence spans 344 residues: GPALPP motifs-containing protein 1 (344 aa).

A disordered region spans residues 1–309 (MARDLIGPAL…QERIPFDRDK (309 aa)). Residue Ala-2 is modified to N-acetylalanine. Residues 7 to 12 (GPALPP) carry the GPALPP motif 1 motif. Residue Ser-28 is modified to Phosphoserine. The GPALPP motif 2 motif lies at 30–35 (GPALPP). Composition is skewed to acidic residues over residues 58-67 (GNQESEEDDT) and 80-93 (DDND…DDDG). The GPALPP motif 3 motif lies at 96 to 101 (GPALPP). A Phosphoserine modification is found at Ser-109. The segment covering 111 to 120 (PRPIIGPALP) has biased composition (pro residues). A GPALPP motif 4 motif is present at residues 116–121 (GPALPP). Basic and acidic residues predominate over residues 128–137 (QKSDKGRDDP). Thr-142 is subject to Phosphothreonine. A phosphoserine mark is found at Ser-144 and Ser-145. Composition is skewed to basic and acidic residues over residues 167 to 191 (EFEK…KPIV), 231 to 265 (PADR…KRLA), 273 to 283 (ESKRSESLMDI), and 291 to 309 (KAAE…DRDK). Lys-275 is covalently cross-linked (Glycyl lysine isopeptide (Lys-Gly) (interchain with G-Cter in SUMO2)). Lys-312 is covalently cross-linked (Glycyl lysine isopeptide (Lys-Gly) (interchain with G-Cter in SUMO2)).

The protein is GPALPP motifs-containing protein 1 (GPALPP1) of Pongo abelii (Sumatran orangutan).